Here is a 223-residue protein sequence, read N- to C-terminus: UPF0173 metal-dependent hydrolase THA_544 (223 aa).

This sequence belongs to the UPF0173 family.

The protein is UPF0173 metal-dependent hydrolase THA_544 of Thermosipho africanus (strain TCF52B).